The following is a 281-amino-acid chain: 2-dehydro-3-deoxyphosphooctonate aldolase 1 (281 aa).

The protein belongs to the KdsA family.

The protein localises to the cytoplasm. The catalysed reaction is D-arabinose 5-phosphate + phosphoenolpyruvate + H2O = 3-deoxy-alpha-D-manno-2-octulosonate-8-phosphate + phosphate. Its pathway is carbohydrate biosynthesis; 3-deoxy-D-manno-octulosonate biosynthesis; 3-deoxy-D-manno-octulosonate from D-ribulose 5-phosphate: step 2/3. It participates in bacterial outer membrane biogenesis; lipopolysaccharide biosynthesis. This is 2-dehydro-3-deoxyphosphooctonate aldolase 1 (kdsA1) from Pseudomonas putida (strain ATCC 47054 / DSM 6125 / CFBP 8728 / NCIMB 11950 / KT2440).